We begin with the raw amino-acid sequence, 201 residues long: FMN-dependent NADH:quinone oxidoreductase (201 aa).

FMN contacts are provided by residues serine 10, 16–18, 96–99, and 140–143; these read SQS, MYNF, and SRGG.

This sequence belongs to the azoreductase type 1 family. In terms of assembly, homodimer. FMN is required as a cofactor.

It catalyses the reaction 2 a quinone + NADH + H(+) = 2 a 1,4-benzosemiquinone + NAD(+). The enzyme catalyses N,N-dimethyl-1,4-phenylenediamine + anthranilate + 2 NAD(+) = 2-(4-dimethylaminophenyl)diazenylbenzoate + 2 NADH + 2 H(+). Quinone reductase that provides resistance to thiol-specific stress caused by electrophilic quinones. In terms of biological role, also exhibits azoreductase activity. Catalyzes the reductive cleavage of the azo bond in aromatic azo compounds to the corresponding amines. In Salmonella choleraesuis (strain SC-B67), this protein is FMN-dependent NADH:quinone oxidoreductase.